Reading from the N-terminus, the 277-residue chain is MGQKINPNGFRLGITTDHVSHWYADSNQPGQRYKDYIREDVKIRELMSKGMDRAGISKVEIERTRDRVRVDIHTARPGIVIGRRGAEADRIRGELEKLTGKQIQLNILEVKNPEIDAQLVAQGVAEQLASRVAFRRAMKKAIQSAQRAGAKGIRIQCAGRLGGAEMSRSEFYREGRVPLHTLRANIDYGFFEAKTTFGRIGVKVWIYKGDLTDKELAAQQAAAPSSRGRNDRRGGGGGERRRRPNDRNDRGGRRERDSAAAPQQNSAAEANNAEGGK.

In terms of domain architecture, KH type-2 spans 43 to 111 (IRELMSKGMD…QIQLNILEVK (69 aa)). The disordered stretch occupies residues 217 to 277 (AAQQAAAPSS…AEANNAEGGK (61 aa)). Basic and acidic residues predominate over residues 245 to 258 (NDRNDRGGRRERDS). Over residues 259-277 (AAAPQQNSAAEANNAEGGK) the composition is skewed to low complexity.

It belongs to the universal ribosomal protein uS3 family. As to quaternary structure, part of the 30S ribosomal subunit. Forms a tight complex with proteins S10 and S14.

In terms of biological role, binds the lower part of the 30S subunit head. Binds mRNA in the 70S ribosome, positioning it for translation. This Kocuria rhizophila (strain ATCC 9341 / DSM 348 / NBRC 103217 / DC2201) protein is Small ribosomal subunit protein uS3.